We begin with the raw amino-acid sequence, 303 residues long: Uridine diphosphate glucose pyrophosphatase NUDT22 (303 aa).

Substrate is bound by residues Phe-56, Tyr-87, Arg-139, Ala-144, Asp-151, His-156, and Glu-158. Residues 118 to 285 (ADPLGVGAAL…KGAIILYNRV (168 aa)) form the Nudix hydrolase domain. A disordered region spans residues 148–168 (GLVDVPGGHPEPQALCPGGSP). Residues 175-196 (GQLVVHELFSSVLQEICDEVNL) carry the Nudix box motif. Glu-189 and Glu-193 together coordinate Mg(2+). Ser-274 contributes to the substrate binding site.

Belongs to the Nudix hydrolase family. Mg(2+) serves as cofactor.

It carries out the reaction UDP-sugar + H2O = UMP + alpha-D-aldose 1-phosphate.. Functionally, hydrolyzes UDP-glucose to glucose 1-phosphate and UMP and UDP-galactose to galactose 1-phosphate and UMP. Preferred substrate is UDP-glucose. The sequence is that of Uridine diphosphate glucose pyrophosphatase NUDT22 (NUDT22) from Homo sapiens (Human).